Here is a 296-residue protein sequence, read N- to C-terminus: MVSKRDKRISLDDAVGELRSGMTIGIGGWGSRRKPMALVRALLRSDVTDLTVVTYGGPDLGLLCSAGKVTKAYYGFVSLDSAPFYDPWFAKARTAGEIAVREMDEGMVKCGLEAAAARLPFLPIRAGLGSDVRRFWGDELRTVTSPYPDASGKSETLIAMPALNLDAALVHLNLGDKHGNAAYTGVDPYFDDLYCAAAEKRFVSVERVVETEELVKTVPLQNLILNRMMVDGVVEAPNGAHFTLAGDSYGRDEKFQRHYAESAKTPQAWQQFVATYLSGSEDDYQAAVKKFAEEQA.

The protein belongs to the 3-oxoacid CoA-transferase subunit A family. As to quaternary structure, heterotetramer composed of 2 IpdA subunits and 2 IpdB subunits.

It catalyses the reaction (3E)-2-(2-carboxylatoethyl)-3-methyl-6-oxocyclohex-1-ene-1-carboxyl-CoA + H2O = 6-methyl-3,7-dioxodecanedioyl-CoA. The protein operates within steroid metabolism; cholesterol degradation. In terms of biological role, involved in the final steps of cholesterol and steroid degradation. Opens the last steroid ring of cholesterol by catalyzing the hydrolysis of (3E)-2-(2-carboxylatoethyl)-3-methyl-6-oxocyclohex-1-ene-1-carboxyl-CoA (COCHEA-CoA) to 6-methyl-3,7-dioxodecanedioyl-CoA (MeDODA-CoA). This Rhodococcus jostii (strain RHA1) protein is Cholesterol ring-cleaving hydrolase IpdA subunit.